The chain runs to 381 residues: 2-oxoglutarate-dependent dioxygenase FGSG_00048 (381 aa).

The protein belongs to the iron/ascorbate-dependent oxidoreductase family. The cofactor is Fe(2+).

It participates in mycotoxin biosynthesis. 2-oxoglutarate-dependent dioxygenase; part of the gene cluster that mediates the biosynthesis of gramillins A and B, bicyclic lipopeptides that induce cell death in maize leaves but not in wheat leaves. The nonribosomal peptide synthetase GRA1 incorporates respectively a glutamic adic (Glu), a leucine (Leu), a serine (Ser), a hydroxyglutamine (HOGln), a 2-amino decanoic acid, and 2 cysteins (CysB and CysA). The biosynthesis of 2-amino decanoic acid incorporated in gramillins could be initiated by a fatty acid synthase composed of the alpha and beta subunits FGSG_00036 and FGSG_11656. The cytochrome P450 monooxygenase FGSG_15680 could hydroxylate the fatty acid chain. Subsequent oxidation to the ketone by the oxidoreductase FGSG_00048 and transamination by aminotransferase FGSG_00049 could form 2-amino-decanoic acid. On the other hand, FGSG_15680 could also be responsible for the HO-modified glutamine at the gamma-position. Whether hydroxylation occurs on the fully assembled product or on the Gln residue prior to assembly into the gramillins requires further proof. The thioredoxin FGSG_00043 could also be required for the disulfide-bond formation between CysA and CysB. The specific involvement of the remaining proteins from the cluster is more difficult to discern, but could have broader regulatory (FGSG_00040 and FGSG_11657) or enzymatic functions (FGSG_00044 and FGSG_00045). The final C-domain of GRA1 does not possess the expected sequence of a termination CT domain, often implicated in macrocyclization and release of a cyclopeptidein fungal NRPs; and the thioesterase FGSG_00047 may act in concert with the terminal C-domain of GRA1 to catalyze the formation of the macrocyclic anhydride and release of the products. The protein is 2-oxoglutarate-dependent dioxygenase FGSG_00048 of Gibberella zeae (strain ATCC MYA-4620 / CBS 123657 / FGSC 9075 / NRRL 31084 / PH-1) (Wheat head blight fungus).